A 337-amino-acid chain; its full sequence is MPNLTIALDAMGGDFGPHVTIPAAINILKKYKYLSIYLVGNEAEINSLLQNTSTSIKSRFTIIPSLDDIPMDLAPALALRNFKQSSMRMALNLVREGKAQACVSAGNTGALMVLSRHLLKVLPFVDRPALVSTLPSMTTQPVYMLDLGVNVSCDADALLQFALMGSALAEHVGNIPIPRVALLNVGQEDIKGNDLVKHAAQLLSKNPNLNYIGFIEGNDIFSGKADVIVCDGFTGNVALKTSEGVVDLVISQLTSVSNNNIFTKLLSLLVKPLIMSSLKRLKPDQYNGATLLGLPGIVIKSHGNAKQVAFEFAIEQAVKEVESGLVNKISASLDIID.

The protein belongs to the PlsX family. Homodimer. Probably interacts with PlsY.

Its subcellular location is the cytoplasm. The enzyme catalyses a fatty acyl-[ACP] + phosphate = an acyl phosphate + holo-[ACP]. It participates in lipid metabolism; phospholipid metabolism. Catalyzes the reversible formation of acyl-phosphate (acyl-PO(4)) from acyl-[acyl-carrier-protein] (acyl-ACP). This enzyme utilizes acyl-ACP as fatty acyl donor, but not acyl-CoA. This chain is Phosphate acyltransferase, found in Moritella marina (Vibrio marinus).